A 447-amino-acid chain; its full sequence is MKTLLLCVGLLLSWERGQVLGDQLVSDNELQEMSTQGSKYIDREIQNAVKGVQEIKTLIEKTNEERKTLLSVLEEAKKNKEDALNETRDSETKLKAFPEVCNETMMALWEECKPCLKQTCMKFYARVCRSGSGLVGRQLEEFLNQSSPFYFWINGDRIDSLLENDRQQSHVLDVMQDSFNRATGIMDELFQDRFFTHKPQDTFYHSPFSYFRRPPLHYAKSRLVRNIMPLSLYGPLNFQDMFQPFFEMIHQAQQAMDVHLHSPAYQTPNVEFITGGPDDRAVCKEIRHNSTGCLRMKDQCAKCQEILSVDCSANNPSQNQLRQELNDSLRLAEELTKRYNELLQSYQWKMLNTSSLLDQPNEQFNWVSQLANLTQGPDQYYLRVSTVTSHTSESEAPSRVTEVVVKLFDSDPITITIPEEVSRDNPKFMETVAEKALQEYRKKKRVE.

Positions 1-22 (MKTLLLCVGLLLSWERGQVLGD) are cleaved as a signal peptide. A Nuclear localization signal motif is present at residues 77 to 80 (KKNK). Residues Asn85 and Asn102 are each glycosylated (N-linked (GlcNAc...) asparagine). Disulfide bonds link Cys101–Cys311, Cys112–Cys303, Cys115–Cys300, Cys120–Cys293, and Cys128–Cys283. Position 132 is a phosphoserine (Ser132). N-linked (GlcNAc...) asparagine glycans are attached at residues Asn144, Asn289, Asn326, Asn352, and Asn372. Ser394 carries the post-translational modification Phosphoserine. Residues 441–445 (RKKKR) carry the Nuclear localization signal motif.

It belongs to the clusterin family. In terms of assembly, antiparallel disulfide-linked heterodimer of an alpha chain and a beta chain. Self-associates and forms higher oligomers. Interacts with a broad range of misfolded proteins, including APP, APOC2 and LYZ. Slightly acidic pH promotes interaction with misfolded proteins. Forms high-molecular weight oligomers upon interaction with misfolded proteins. Interacts with APOA1, LRP2, CLUAP1 and PON1. Interacts with the complement membrane attack complex. Interacts (via alpha chain) with XRCC6. Interacts with SYVN1, COMMD1, BTRC, CUL1 and with ubiquitin and SCF (SKP1-CUL1-F-box protein) E3 ubiquitin-protein ligase complexes. Interacts (via alpha chain) with BAX in stressed cells, where BAX undergoes a conformation change leading to association with the mitochondrial membrane. Does not interact with BAX in unstressed cells. Found in a complex with LTF, CLU, EPPIN and SEMG1. Interacts (immaturely glycosylated pre-secreted form) with HSPA5; this interaction promotes CLU stability and facilitates stress-induced CLU retrotranslocation from the secretory pathway to the mitochondria, thereby reducing stress-induced apoptosis by stabilizing mitochondrial membrane integrity. Interacts with BCL2L1; this interaction releases and activates BAX and promotes cell death. Interacts with TGFBR2 and ACVR1. Interacts (secreted form) with STMN3; this interaction may act as an important modulator during neuronal differentiation. Interacts with VLDLR and LRP8. Proteolytically cleaved on its way through the secretory system, probably within the Golgi lumen. Proteolytic cleavage is not necessary for its chaperone activity. All non-secreted forms are not proteolytically cleaved. Chaperone activity of uncleaved forms is dependent on a non-reducing environment. Post-translationally, polyubiquitinated, leading to proteasomal degradation. Under cellular stress, the intracellular level of cleaved form is reduced due to proteasomal degradation. In terms of processing, heavily N-glycosylated. About 30% of the protein mass is comprised of complex N-linked carbohydrate. Endoplasmic reticulum (ER) stress induces changes in glycosylation status and increases level of hypoglycosylated forms. Core carbohydrates are essential for chaperone activity. Non-secreted forms are hypoglycosylated or unglycosylated.

It localises to the secreted. The protein localises to the nucleus. Its subcellular location is the cytoplasm. It is found in the mitochondrion membrane. The protein resides in the cytosol. It localises to the microsome. The protein localises to the endoplasmic reticulum. Its subcellular location is the mitochondrion. It is found in the perinuclear region. The protein resides in the cytoplasmic vesicle. It localises to the secretory vesicle. The protein localises to the chromaffin granule. Functionally, functions as extracellular chaperone that prevents aggregation of non native proteins. Prevents stress-induced aggregation of blood plasma proteins. Inhibits formation of amyloid fibrils by APP, APOC2, B2M, CALCA, CSN3, SNCA and aggregation-prone LYZ variants (in vitro). Does not require ATP. Maintains partially unfolded proteins in a state appropriate for subsequent refolding by other chaperones, such as HSPA8/HSC70. Does not refold proteins by itself. Binding to cell surface receptors triggers internalization of the chaperone-client complex and subsequent lysosomal or proteasomal degradation. When secreted, protects cells against apoptosis and against cytolysis by complement: inhibits assembly of the complement membrane attack complex (MAC) by preventing polymerization of C9 pore component of the MAC complex. Intracellular forms interact with ubiquitin and SCF (SKP1-CUL1-F-box protein) E3 ubiquitin-protein ligase complexes and promote the ubiquitination and subsequent proteasomal degradation of target proteins. Promotes proteasomal degradation of COMMD1 and IKBKB. Modulates NF-kappa-B transcriptional activity. Following stress, promotes apoptosis. Inhibits apoptosis when associated with the mitochondrial membrane by interference with BAX-dependent release of cytochrome c into the cytoplasm. Plays a role in the regulation of cell proliferation. An intracellular form suppresses stress-induced apoptosis by stabilizing mitochondrial membrane integrity through interaction with HSPA5. Secreted form does not affect caspase or BAX-mediated intrinsic apoptosis and TNF-induced NF-kappa-B-activity. Secreted form act as an important modulator during neuronal differentiation through interaction with STMN3. Plays a role in the clearance of immune complexes that arise during cell injury. In Oryctolagus cuniculus (Rabbit), this protein is Clusterin (CLU).